Here is a 352-residue protein sequence, read N- to C-terminus: 4-hydroxy-2-oxovalerate aldolase 5 (352 aa).

Residues 9–261 (IRVTDSSLRD…RTGIDTLKII (253 aa)) form the Pyruvate carboxyltransferase domain. Residue 17-18 (RD) participates in substrate binding. Asp18 provides a ligand contact to Mn(2+). Residue His21 is the Proton acceptor of the active site. Substrate is bound by residues Ser171 and His200. Mn(2+)-binding residues include His200 and His202. A substrate-binding site is contributed by Tyr291.

It belongs to the 4-hydroxy-2-oxovalerate aldolase family.

It carries out the reaction (S)-4-hydroxy-2-oxopentanoate = acetaldehyde + pyruvate. The chain is 4-hydroxy-2-oxovalerate aldolase 5 from Rhodococcus opacus (strain B4).